We begin with the raw amino-acid sequence, 276 residues long: Extracellular metalloprotease 1 (276 aa).

Positions 1-18 (MRVSVPVLALAFGSLAAA) are cleaved as a signal peptide. His-191 lines the Zn(2+) pocket. Glu-192 is a catalytic residue. His-195 provides a ligand contact to Zn(2+). A disordered region spans residues 211-233 (GDYVSDTPPQRSPSSGCPVGRDS). Cys-227 and Cys-253 are oxidised to a cystine.

This sequence belongs to the peptidase M43B family.

Its subcellular location is the secreted. Its function is as follows. Secreted metalloproteinase that allows assimilation of proteinaceous substrates. Pays a pivotal role as a pathogenicity determinant during infections and contributes to the ability of the pathogen to persist within the mammalian host. Digests an immunodominant cell surface antigen (SOWgp) and prevents host recognition of endospores during the phase of development when these fungal cells are most vulnerable to phagocytic cell defenses. The protein is Extracellular metalloprotease 1 (MEP1) of Coccidioides posadasii (strain C735) (Valley fever fungus).